Here is a 272-residue protein sequence, read N- to C-terminus: Undecaprenyl-diphosphatase (272 aa).

7 consecutive transmembrane segments (helical) span residues 2-22, 43-63, 82-102, 110-130, 185-205, 224-244, and 252-272; these read FDII…FLPI, FISM…VLLY, WQLW…GLPL, LHTP…FIIL, YVAT…VLII, VLMT…KWLL, and FKPF…VMFI.

It belongs to the UppP family.

The protein localises to the cell membrane. The catalysed reaction is di-trans,octa-cis-undecaprenyl diphosphate + H2O = di-trans,octa-cis-undecaprenyl phosphate + phosphate + H(+). Catalyzes the dephosphorylation of undecaprenyl diphosphate (UPP). Confers resistance to bacitracin. The protein is Undecaprenyl-diphosphatase of Lacticaseibacillus casei (strain BL23) (Lactobacillus casei).